The chain runs to 319 residues: ATP-dependent 6-phosphofructokinase (319 aa).

ATP is bound at residue G11. 21 to 25 (RAVVR) provides a ligand contact to ADP. ATP-binding positions include 72 to 73 (RC) and 102 to 105 (GDGS). D103 serves as a coordination point for Mg(2+). 125 to 127 (TID) contributes to the substrate binding site. Residue D127 is the Proton acceptor of the active site. R154 is a binding site for ADP. Substrate-binding positions include R162 and 169–171 (MGR). Residues 185–187 (GAE), R211, and 213–215 (KKH) each bind ADP. Residues E222, R243, and 249–252 (HIQR) each bind substrate.

Belongs to the phosphofructokinase type A (PFKA) family. ATP-dependent PFK group I subfamily. Prokaryotic clade 'B1' sub-subfamily. As to quaternary structure, homotetramer. It depends on Mg(2+) as a cofactor.

It is found in the cytoplasm. The enzyme catalyses beta-D-fructose 6-phosphate + ATP = beta-D-fructose 1,6-bisphosphate + ADP + H(+). It participates in carbohydrate degradation; glycolysis; D-glyceraldehyde 3-phosphate and glycerone phosphate from D-glucose: step 3/4. Allosterically activated by ADP and other diphosphonucleosides, and allosterically inhibited by phosphoenolpyruvate. In terms of biological role, catalyzes the phosphorylation of D-fructose 6-phosphate to fructose 1,6-bisphosphate by ATP, the first committing step of glycolysis. This Bacillus licheniformis (strain ATCC 14580 / DSM 13 / JCM 2505 / CCUG 7422 / NBRC 12200 / NCIMB 9375 / NCTC 10341 / NRRL NRS-1264 / Gibson 46) protein is ATP-dependent 6-phosphofructokinase.